A 218-amino-acid chain; its full sequence is Protein-lysine N-methyltransferase M142.8 (218 aa).

It belongs to the class I-like SAM-binding methyltransferase superfamily. EFM5 family.

It localises to the cytoplasm. S-adenosyl-L-methionine-dependent protein-lysine N-methyltransferase that methylates elongation factor 1-alpha. This Caenorhabditis elegans protein is Protein-lysine N-methyltransferase M142.8.